The following is a 291-amino-acid chain: N-acetylmannosamine kinase (291 aa).

ATP-binding positions include Ala-5–Lys-12 and Gly-132–Ser-139. Residues His-156, Cys-166, Cys-168, and Cys-173 each coordinate Zn(2+).

Belongs to the ROK (NagC/XylR) family. NanK subfamily. As to quaternary structure, homodimer.

The catalysed reaction is an N-acyl-D-mannosamine + ATP = an N-acyl-D-mannosamine 6-phosphate + ADP + H(+). It participates in amino-sugar metabolism; N-acetylneuraminate degradation; D-fructose 6-phosphate from N-acetylneuraminate: step 2/5. Its function is as follows. Catalyzes the phosphorylation of N-acetylmannosamine (ManNAc) to ManNAc-6-P. This is N-acetylmannosamine kinase from Escherichia coli (strain SMS-3-5 / SECEC).